A 448-amino-acid polypeptide reads, in one-letter code: Phosphoglucosamine mutase (448 aa).

Ser99 acts as the Phosphoserine intermediate in catalysis. The Mg(2+) site is built by Ser99, Asp239, Asp241, and Asp243. At Ser99 the chain carries Phosphoserine.

The protein belongs to the phosphohexose mutase family. The cofactor is Mg(2+). In terms of processing, activated by phosphorylation.

The enzyme catalyses alpha-D-glucosamine 1-phosphate = D-glucosamine 6-phosphate. Its function is as follows. Catalyzes the conversion of glucosamine-6-phosphate to glucosamine-1-phosphate. This is Phosphoglucosamine mutase from Lachnoclostridium phytofermentans (strain ATCC 700394 / DSM 18823 / ISDg) (Clostridium phytofermentans).